The sequence spans 472 residues: Eukaryotic translation initiation factor 2 subunit 3 (472 aa).

Ala2 is modified (N-acetylalanine; partial). The tr-type G domain occupies 39–247 (QATINIGTIG…YIVKKIPVPL (209 aa)). The tract at residues 48-55 (GHVAHGKS) is G1. 51 to 56 (AHGKST) contacts GTP. Residues 76-80 (NITIK) are G2. The tract at residues 134–137 (DCPG) is G3. Residues 190-193 (NKID) and 225-227 (SAQ) contribute to the GTP site. A G4 region spans residues 190–193 (NKID). Residues 225 to 227 (SAQ) form a G5 region. An interacts with CDC123 region spans residues 457–469 (GQIRRGVTIKPTV).

This sequence belongs to the TRAFAC class translation factor GTPase superfamily. Classic translation factor GTPase family. EIF2G subfamily. Eukaryotic translation initiation factor 2 eIF2 is a heterotrimeric complex composed of an alpha (EIF2S1), a beta (EIF2S2) and a gamma (EIF2S3) chain. eIF2 is member of the 43S pre-initiation complex (43S PIC).

It localises to the cytoplasm. The protein resides in the cytosol. It catalyses the reaction GTP + H2O = GDP + phosphate + H(+). Member of the eIF2 complex that functions in the early steps of protein synthesis by forming a ternary complex with GTP and initiator tRNA. This complex binds to a 40S ribosomal subunit, followed by mRNA binding to form the 43S pre-initiation complex (43S PIC). Junction of the 60S ribosomal subunit to form the 80S initiation complex is preceded by hydrolysis of the GTP bound to eIF2 and release of an eIF2-GDP binary complex. In order for eIF2 to recycle and catalyze another round of initiation, the GDP bound to eIF2 must exchange with GTP by way of a reaction catalyzed by eIF-2B. The sequence is that of Eukaryotic translation initiation factor 2 subunit 3 (EIF2S3) from Gallus gallus (Chicken).